The primary structure comprises 344 residues: 4-dimethylallyltryptophan N-methyltransferase easF (344 aa).

The protein belongs to the methyltransferase superfamily. Homodimer.

The catalysed reaction is 4-(3-methylbut-2-enyl)-L-tryptophan + S-adenosyl-L-methionine = 4-(3-methylbut-2-enyl)-L-abrine + S-adenosyl-L-homocysteine + H(+). The protein operates within alkaloid biosynthesis; ergot alkaloid biosynthesis. 4-dimethylallyltryptophan N-methyltransferase; part of the gene cluster that mediates the biosynthesis of fungal ergot alkaloid ergovaline, the predominant ergopeptine product in E.festucae var. lolii. DmaW catalyzes the first step of ergot alkaloid biosynthesis by condensing dimethylallyl diphosphate (DMAP) and tryptophan to form 4-dimethylallyl-L-tryptophan. The second step is catalyzed by the methyltransferase easF that methylates 4-dimethylallyl-L-tryptophan in the presence of S-adenosyl-L-methionine, resulting in the formation of 4-dimethylallyl-L-abrine. The catalase easC and the FAD-dependent oxidoreductase easE then transform 4-dimethylallyl-L-abrine to chanoclavine-I which is further oxidized by easD in the presence of NAD(+), resulting in the formation of chanoclavine-I aldehyde. Agroclavine dehydrogenase easG then mediates the conversion of chanoclavine-I aldehyde to agroclavine via a non-enzymatic adduct reaction: the substrate is an iminium intermediate that is formed spontaneously from chanoclavine-I aldehyde in the presence of glutathione. The presence of easA is not required to complete this reaction. Further conversion of agroclavine to paspalic acid is a two-step process involving oxidation of agroclavine to elymoclavine and of elymoclavine to paspalic acid, the second step being performed by the elymoclavine oxidase cloA. Paspalic acid is then further converted to D-lysergic acid. Ergovaline is assembled from D-lysergic acid and three different amino acids by the D-lysergyl-peptide-synthetase composed of a monomudular (lpsB) and a trimodular (lpsA) nonribosomal peptide synthetase subunit. This chain is 4-dimethylallyltryptophan N-methyltransferase easF, found in Epichloe festucae var. lolii (Neotyphodium lolii).